Reading from the N-terminus, the 404-residue chain is Glucose-1-phosphate adenylyltransferase 2 (404 aa).

Residues Y97, G162, 177–178, and S195 each bind alpha-D-glucose 1-phosphate; that span reads EK.

This sequence belongs to the bacterial/plant glucose-1-phosphate adenylyltransferase family. In terms of assembly, homotetramer.

It carries out the reaction alpha-D-glucose 1-phosphate + ATP + H(+) = ADP-alpha-D-glucose + diphosphate. Its pathway is glycan biosynthesis; glycogen biosynthesis. In terms of biological role, involved in the biosynthesis of ADP-glucose, a building block required for the elongation reactions to produce glycogen. Catalyzes the reaction between ATP and alpha-D-glucose 1-phosphate (G1P) to produce pyrophosphate and ADP-Glc. This is Glucose-1-phosphate adenylyltransferase 2 from Vibrio vulnificus (strain CMCP6).